A 942-amino-acid polypeptide reads, in one-letter code: E3 ubiquitin-protein ligase HACE1 (942 aa).

ANK repeat units follow at residues 23-55, 64-93, 97-126, 130-159, 163-192, 196-226, and 228-253; these read LPDD…NSKF, VKRS…NPNY, SGCT…DVNI, EGLT…NVDV, MGQT…DINR, SGAT…YLPD, and NGIT…QYHP. The tract at residues 428–459 is disordered; it reads KGPDHQDATPTPSFAAAGTESRKELSTDTGDS. The span at 447–459 shows a compositional bias: basic and acidic residues; sequence ESRKELSTDTGDS. The HECT domain occupies 607-942; the sequence is NCAKLKQGIA…HCGSYGYTMA (336 aa). C909 acts as the Glycyl thioester intermediate in catalysis.

It is found in the golgi apparatus. The protein resides in the golgi stack membrane. It localises to the cytoplasm. Its subcellular location is the endoplasmic reticulum. It catalyses the reaction S-ubiquitinyl-[E2 ubiquitin-conjugating enzyme]-L-cysteine + [acceptor protein]-L-lysine = [E2 ubiquitin-conjugating enzyme]-L-cysteine + N(6)-ubiquitinyl-[acceptor protein]-L-lysine.. It functions in the pathway protein modification; protein ubiquitination. Functionally, E3 ubiquitin-protein ligase involved in Golgi membrane fusion and regulation of small GTPases. Acts as a regulator of Golgi membrane dynamics during the cell cycle: recruited to Golgi membrane by Rab proteins and regulates postmitotic Golgi membrane fusion. Acts by mediating ubiquitination during mitotic Golgi disassembly, ubiquitination serving as a signal for Golgi reassembly later, after cell division. The sequence is that of E3 ubiquitin-protein ligase HACE1 (HACE1) from Gallus gallus (Chicken).